Reading from the N-terminus, the 600-residue chain is NADH-quinone oxidoreductase subunit C/D (600 aa).

Residues 1 to 190 (MVNNMTDLTA…SPFELTKAKQ (190 aa)) form an NADH dehydrogenase I subunit C region. Residues 214–600 (DFMFLNLGPN…IDFVMSDVDR (387 aa)) are NADH dehydrogenase I subunit D.

This sequence in the N-terminal section; belongs to the complex I 30 kDa subunit family. In the C-terminal section; belongs to the complex I 49 kDa subunit family. NDH-1 is composed of 13 different subunits. Subunits NuoB, CD, E, F, and G constitute the peripheral sector of the complex.

It localises to the cell inner membrane. It catalyses the reaction a quinone + NADH + 5 H(+)(in) = a quinol + NAD(+) + 4 H(+)(out). Functionally, NDH-1 shuttles electrons from NADH, via FMN and iron-sulfur (Fe-S) centers, to quinones in the respiratory chain. The immediate electron acceptor for the enzyme in this species is believed to be ubiquinone. Couples the redox reaction to proton translocation (for every two electrons transferred, four hydrogen ions are translocated across the cytoplasmic membrane), and thus conserves the redox energy in a proton gradient. This Escherichia coli O127:H6 (strain E2348/69 / EPEC) protein is NADH-quinone oxidoreductase subunit C/D.